Consider the following 141-residue polypeptide: Period circadian protein (141 aa).

The tract at residues 1-141 (EGSGGSGSSG…VTLTESLLNK (141 aa)) is disordered. Residues 11–23 (HFTTGSNVHMSSV) are compositionally biased toward polar residues. Residues 29–68 (GGTGGTGTGTGTGTGTGTGTGTGTGTGTGTGTGTGTGTGT) show a composition bias toward gly residues. 19 repeat units span residues 30-31 (GT), 33-34 (GT), 35-36 (GT), 37-38 (GT), 39-40 (GT), 41-42 (GT), 43-44 (GT), 45-46 (GT), 47-48 (GT), 49-50 (GT), 51-52 (GT), 53-54 (GT), 55-56 (GT), 57-58 (GT), 59-60 (GT), 61-62 (GT), 63-64 (GT), 65-66 (GT), and 67-68 (GT). A 32 X 2 AA approximate tandem repeats of G-T region spans residues 30-94 (GTGGTGTGTG…ANGTGTGKGT (65 aa)). The 20; approximate repeat unit spans residues 69–70 (AS). Residues 69–85 (ASGTATGTASGTATGTA) are compositionally biased toward low complexity. Repeat unit 21 spans residues 71 to 72 (GT). Residues 73 to 74 (AT) form a 22; approximate repeat. The stretch at 75 to 76 (GT) is repeat 23. A 24; approximate repeat occupies 77–78 (AS). The stretch at 79–80 (GT) is repeat 25. A 26; approximate repeat occupies 81–82 (AT). Repeat unit 27 spans residues 83 to 84 (GT). The stretch at 85–86 (AN) is one 28; approximate repeat. Repeat copies occupy residues 87–88 (GT) and 89–90 (GT). One copy of the 31; approximate repeat lies at 91 to 92 (GK). Residues 93–94 (GT) form repeat 32. Residues 101–113 (SGSGSGTGTGTGT) show a composition bias toward gly residues. Residues 114–129 (GTTTTTTTGNNSSSST) show a composition bias toward low complexity. The span at 130-141 (PPVTLTESLLNK) shows a compositional bias: polar residues.

In terms of assembly, forms a heterodimer with timeless (TIM); the complex then translocates into the nucleus. Phosphorylated with a circadian rhythmicity, probably by the double-time protein (dbt). Phosphorylation could be implicated in the stability of per monomer and in the formation of heterodimer per-tim.

It is found in the nucleus. It localises to the cytoplasm. The protein localises to the perinuclear region. Functionally, essential for biological clock functions. Determines the period length of circadian and ultradian rhythms; an increase in PER dosage leads to shortened circadian rhythms and a decrease leads to lengthened circadian rhythms. Essential for the circadian rhythmicity of locomotor activity, eclosion behavior, and for the rhythmic component of the male courtship song that originates in the thoracic nervous system. The biological cycle depends on the rhythmic formation and nuclear localization of the TIM-PER complex. Light induces the degradation of TIM, which promotes elimination of PER. Nuclear activity of the heterodimer coordinatively regulates PER and TIM transcription through a negative feedback loop. Behaves as a negative element in circadian transcriptional loop. Does not appear to bind DNA, suggesting indirect transcriptional inhibition. This chain is Period circadian protein (per), found in Drosophila serrata (Fruit fly).